A 145-amino-acid chain; its full sequence is Probable 4-amino-4-deoxy-L-arabinose-phosphoundecaprenol flippase subunit ArnF (145 aa).

Residues 1–3 (MAH) lie on the Cytoplasmic side of the membrane. A helical transmembrane segment spans residues 4 to 24 (LTLSIRGLLLALMSVLLISVA). The Periplasmic portion of the chain corresponds to 25–61 (QLSMKWGMGTLNQLWSDLVMLWQGEDYSSLFSQALAP). A helical transmembrane segment spans residues 62–82 (VMAVGAGLFCYALSMACWVMA). At 83–89 (LKRLPLS) the chain is on the cytoplasmic side. A helical transmembrane segment spans residues 90 to 110 (IAYPLLSLSYVLVYLGAVYLP). The Periplasmic segment spans residues 111–114 (WLNE). A helical transmembrane segment spans residues 115–135 (PLSWVKGTGIFLILLGLIFVL). Residues 136-145 (PKKNQTSDKS) are Cytoplasmic-facing.

The protein belongs to the ArnF family. In terms of assembly, heterodimer of ArnE and ArnF.

The protein resides in the cell inner membrane. It participates in bacterial outer membrane biogenesis; lipopolysaccharide biosynthesis. In terms of biological role, translocates 4-amino-4-deoxy-L-arabinose-phosphoundecaprenol (alpha-L-Ara4N-phosphoundecaprenol) from the cytoplasmic to the periplasmic side of the inner membrane. The sequence is that of Probable 4-amino-4-deoxy-L-arabinose-phosphoundecaprenol flippase subunit ArnF from Shewanella sediminis (strain HAW-EB3).